Consider the following 227-residue polypeptide: Cytochrome c oxidase subunit 2 (227 aa).

Residues Met1–His26 lie on the Mitochondrial intermembrane side of the membrane. A helical membrane pass occupies residues Ala27 to Asn48. At Lys49–Glu62 the chain is on the mitochondrial matrix side. Residues Thr63 to Arg82 traverse the membrane as a helical segment. Residues Leu83–Ala227 are Mitochondrial intermembrane-facing. The Cu cation site is built by His161, Cys196, Glu198, Cys200, His204, and Met207. Mg(2+) is bound at residue Glu198.

Belongs to the cytochrome c oxidase subunit 2 family. In terms of assembly, component of the cytochrome c oxidase (complex IV, CIV), a multisubunit enzyme composed of a catalytic core of 3 subunits and several supernumerary subunits. The complex exists as a monomer or a dimer and forms supercomplexes (SCs) in the inner mitochondrial membrane with ubiquinol-cytochrome c oxidoreductase (cytochrome b-c1 complex, complex III, CIII). Cu cation serves as cofactor.

It is found in the mitochondrion inner membrane. It catalyses the reaction 4 Fe(II)-[cytochrome c] + O2 + 8 H(+)(in) = 4 Fe(III)-[cytochrome c] + 2 H2O + 4 H(+)(out). Component of the cytochrome c oxidase, the last enzyme in the mitochondrial electron transport chain which drives oxidative phosphorylation. The respiratory chain contains 3 multisubunit complexes succinate dehydrogenase (complex II, CII), ubiquinol-cytochrome c oxidoreductase (cytochrome b-c1 complex, complex III, CIII) and cytochrome c oxidase (complex IV, CIV), that cooperate to transfer electrons derived from NADH and succinate to molecular oxygen, creating an electrochemical gradient over the inner membrane that drives transmembrane transport and the ATP synthase. Cytochrome c oxidase is the component of the respiratory chain that catalyzes the reduction of oxygen to water. Electrons originating from reduced cytochrome c in the intermembrane space (IMS) are transferred via the dinuclear copper A center (CU(A)) of subunit 2 and heme A of subunit 1 to the active site in subunit 1, a binuclear center (BNC) formed by heme A3 and copper B (CU(B)). The BNC reduces molecular oxygen to 2 water molecules using 4 electrons from cytochrome c in the IMS and 4 protons from the mitochondrial matrix. The polypeptide is Cytochrome c oxidase subunit 2 (COII) (Sitophilus granarius (Granary weevil)).